A 54-amino-acid chain; its full sequence is Large ribosomal subunit protein bL33 (54 aa).

The protein belongs to the bacterial ribosomal protein bL33 family.

The sequence is that of Large ribosomal subunit protein bL33 from Petrotoga mobilis (strain DSM 10674 / SJ95).